The chain runs to 982 residues: Capsid protein (982 aa).

Disordered stretches follow at residues 592–613 (VFRS…RWLT) and 628–655 (EPPA…HEEE). Basic and acidic residues predominate over residues 597-613 (PRRESTTTTDDSPRWLT). Over residues 635–649 (GRSSSPVTSSISEGT) the composition is skewed to polar residues.

In terms of assembly, homomultimer.

It localises to the virion. In terms of biological role, capsid protein self-assembles to form an icosahedral capsid with a T=1 symmetry, about 35-40 nm in diameter. In Penicillium chrysogenum virus (isolate Caston/2003) (PcV), this protein is Capsid protein (p2).